The chain runs to 304 residues: ADP-polyphosphate phosphotransferase (304 aa).

It belongs to the polyphosphate kinase 2 (PPK2) family. Class I subfamily.

It catalyses the reaction [phosphate](n) + ATP = [phosphate](n+1) + ADP. Functionally, uses inorganic polyphosphate (polyP) as a donor to convert ADP to ATP. This is ADP-polyphosphate phosphotransferase from Pseudomonas aeruginosa (strain ATCC 15692 / DSM 22644 / CIP 104116 / JCM 14847 / LMG 12228 / 1C / PRS 101 / PAO1).